The primary structure comprises 436 residues: Drebrin-like protein (436 aa).

Residues 2–133 enclose the ADF-H domain; the sequence is AVNLSRNGPA…EPECIMEKVA (132 aa). Threonine 26 is modified (phosphothreonine). Serine 160 carries the post-translational modification Phosphoserine. Residue lysine 176 is modified to N6-acetyllysine. A coiled-coil region spans residues 179 to 233; sequence FWAKAEKEEENRRLEEKRRAEEERQRLEEERRERELQEAARREQRYQEQHRSAGA. Composition is skewed to basic and acidic residues over residues 185 to 229 and 264 to 275; these read KEEE…EQHR and HPREIFKQKERA. Residues 185–341 are disordered; that stretch reads KEEENRRLEE…AQTEEEPTYE (157 aa). Residues 276–286 show a composition bias toward polar residues; it reads MSTTSVTSSQP. Phosphoserine occurs at positions 277, 280, 283, and 291. The span at 294-303 shows a compositional bias: polar residues; it reads LQKQLTQPET. Lysine 296 is subject to N6-acetyllysine. Threonine 299 is modified (phosphothreonine). Phosphotyrosine is present on residues tyrosine 340 and tyrosine 350. The SH3 domain occupies 377-436; it reads GQGLCARALYDYQAADDTEISFDPENLITGIEVIDEGWWRGYGPDGHFGMFPANYVELIE.

This sequence belongs to the ABP1 family. In terms of assembly, interacts with SHANK3, SYN1 and PRAM1. Interacts with SHANK2. Interacts with FGD1, DNM1 and MAP4K1. Interacts with ANKRD54. Interacts with COBL. Interacts with WASL and WIPF1. Detected in hippocampus neurons and in the Purkinje cell layer in cerebellum (at protein level). Predominantly expressed in brain, thymus and spleen. Also found in testis, heart and lung. Little or no expression detected in ovary or muscle.

The protein localises to the cytoplasm. Its subcellular location is the cytoskeleton. It localises to the cell projection. The protein resides in the lamellipodium. It is found in the ruffle. The protein localises to the cell cortex. Its subcellular location is the cytosol. It localises to the synapse. The protein resides in the perikaryon. It is found in the neuron projection. The protein localises to the cell membrane. Its subcellular location is the cytoplasmic vesicle. It localises to the clathrin-coated vesicle membrane. The protein resides in the golgi apparatus membrane. It is found in the podosome. The protein localises to the early endosome. Its subcellular location is the dendrite. It localises to the postsynaptic density. In terms of biological role, adapter protein that binds F-actin and DNM1, and thereby plays a role in receptor-mediated endocytosis. Plays a role in the reorganization of the actin cytoskeleton, formation of cell projections, such as neurites, in neuron morphogenesis and synapse formation via its interaction with WASL and COBL. Does not bind G-actin and promote actin polymerization by itself. Required for the formation of organized podosome rosettes. May act as a common effector of antigen receptor-signaling pathways in leukocytes. Acts as a key component of the immunological synapse that regulates T-cell activation by bridging TCRs and the actin cytoskeleton to gene activation and endocytic processes. The chain is Drebrin-like protein from Mus musculus (Mouse).